The following is a 262-amino-acid chain: Spindlin-W (262 aa).

The interval 1 to 49 (MKTPFGKSPAQRSRADAGHTRVSASMMKKRTSHKKHRNNVGPSKPISQP) is disordered. Residues 27-38 (MKKRTSHKKHRN) are compositionally biased toward basic residues.

Belongs to the SPIN/STSY family. As to expression, expressed predominantly in ovarian granulosa and thecal cell.

It localises to the nucleus. In terms of biological role, may play a role in mitosis. This chain is Spindlin-W (SPINW), found in Gallus gallus (Chicken).